Here is a 546-residue protein sequence, read N- to C-terminus: Casein kinase I homolog 2 (546 aa).

Polar residues-rich tracts occupy residues 1–33 and 44–55; these read MSQVQSPLTATNSGLAVNNNTMNSQMPNRSNVR and HVSSNLNHNTGN. Residues 1-67 are disordered; the sequence is MSQVQSPLTA…ASYSGSQSRD (67 aa). At Ser-2 the chain carries N-acetylserine. The 285-residue stretch at 76 to 360 folds into the Protein kinase domain; the sequence is YKIGKKIGEG…ETADGQYDWM (285 aa). Residues 82–90 and Lys-105 each bind ATP; that span reads IGEGSFGVL. Asp-195 (proton acceptor) is an active-site residue. Disordered stretches follow at residues 373-425 and 443-546; these read NKKP…QAQA and QQAN…LGCC. Residues 412–425 show a composition bias toward low complexity; it reads QQQQQQQAQAQAQA. Positions 453–465 are enriched in basic and acidic residues; it reads DDSHYDEEREASK. Phosphoserine is present on Ser-455. Residue Lys-465 forms a Glycyl lysine isopeptide (Lys-Gly) (interchain with G-Cter in ubiquitin) linkage. Low complexity predominate over residues 475–496; sequence QQQTQQKYAQQQQKQMQQKSKQ. Positions 497 to 530 are enriched in polar residues; that stretch reads FANTGANGQTNKYPYNAQPTANDEQNAKNAAQDR. Low complexity predominate over residues 533–546; it reads NKSSKGFFSKLGCC. Residues Cys-545 and Cys-546 are each lipidated (S-palmitoyl cysteine).

The protein belongs to the protein kinase superfamily. CK1 Ser/Thr protein kinase family. Casein kinase I subfamily. In terms of processing, palmitoylated by AKR1, which is required for proper plasma membrane localization of YCK2.

It is found in the cell membrane. The catalysed reaction is L-seryl-[protein] + ATP = O-phospho-L-seryl-[protein] + ADP + H(+). The enzyme catalyses L-threonyl-[protein] + ATP = O-phospho-L-threonyl-[protein] + ADP + H(+). Its function is as follows. Casein kinases are operationally defined by their preferential utilization of acidic proteins such as caseins as substrates. In Saccharomyces cerevisiae (strain ATCC 204508 / S288c) (Baker's yeast), this protein is Casein kinase I homolog 2 (YCK2).